A 512-amino-acid chain; its full sequence is Histidine ammonia-lyase (512 aa).

The 5-imidazolinone (Cys-Gly) cross-link spans 143–145; the sequence is CSG. At Ser144 the chain carries 2,3-didehydroalanine (Ser).

It belongs to the PAL/histidase family. In terms of processing, contains an active site 4-methylidene-imidazol-5-one (MIO), which is formed autocatalytically by cyclization and dehydration of residues Cys-Ser-Gly.

It localises to the cytoplasm. The catalysed reaction is L-histidine = trans-urocanate + NH4(+). Its pathway is amino-acid degradation; L-histidine degradation into L-glutamate; N-formimidoyl-L-glutamate from L-histidine: step 1/3. This chain is Histidine ammonia-lyase, found in Streptomyces coelicolor (strain ATCC BAA-471 / A3(2) / M145).